The sequence spans 307 residues: Ribosomal RNA small subunit methyltransferase H (307 aa).

S-adenosyl-L-methionine is bound by residues 33 to 35, Asp-51, Phe-82, Asp-96, and Gln-103; that span reads GGY.

This sequence belongs to the methyltransferase superfamily. RsmH family.

It localises to the cytoplasm. It carries out the reaction cytidine(1402) in 16S rRNA + S-adenosyl-L-methionine = N(4)-methylcytidine(1402) in 16S rRNA + S-adenosyl-L-homocysteine + H(+). Its function is as follows. Specifically methylates the N4 position of cytidine in position 1402 (C1402) of 16S rRNA. The protein is Ribosomal RNA small subunit methyltransferase H of Rickettsia massiliae (strain Mtu5).